Consider the following 181-residue polypeptide: Acireductone dioxygenase (181 aa).

Residues H97, H99, E103, and H141 each coordinate Fe(2+). Residues H97, H99, E103, and H141 each contribute to the Ni(2+) site.

The protein belongs to the acireductone dioxygenase (ARD) family. As to quaternary structure, monomer. Requires Fe(2+) as cofactor. It depends on Ni(2+) as a cofactor.

It catalyses the reaction 1,2-dihydroxy-5-(methylsulfanyl)pent-1-en-3-one + O2 = 3-(methylsulfanyl)propanoate + CO + formate + 2 H(+). The catalysed reaction is 1,2-dihydroxy-5-(methylsulfanyl)pent-1-en-3-one + O2 = 4-methylsulfanyl-2-oxobutanoate + formate + 2 H(+). Its pathway is amino-acid biosynthesis; L-methionine biosynthesis via salvage pathway; L-methionine from S-methyl-5-thio-alpha-D-ribose 1-phosphate: step 5/6. Catalyzes 2 different reactions between oxygen and the acireductone 1,2-dihydroxy-3-keto-5-methylthiopentene (DHK-MTPene) depending upon the metal bound in the active site. Fe-containing acireductone dioxygenase (Fe-ARD) produces formate and 2-keto-4-methylthiobutyrate (KMTB), the alpha-ketoacid precursor of methionine in the methionine recycle pathway. Ni-containing acireductone dioxygenase (Ni-ARD) produces methylthiopropionate, carbon monoxide and formate, and does not lie on the methionine recycle pathway. The protein is Acireductone dioxygenase of Pseudomonas syringae pv. tomato (strain ATCC BAA-871 / DC3000).